The primary structure comprises 127 residues: Aspartate 1-decarboxylase (127 aa).

S25 (schiff-base intermediate with substrate; via pyruvic acid) is an active-site residue. S25 is modified (pyruvic acid (Ser)). T57 lines the substrate pocket. Y58 (proton donor) is an active-site residue. Residue 73–75 (GAA) coordinates substrate.

It belongs to the PanD family. As to quaternary structure, heterooctamer of four alpha and four beta subunits. The cofactor is pyruvate. Post-translationally, is synthesized initially as an inactive proenzyme, which is activated by self-cleavage at a specific serine bond to produce a beta-subunit with a hydroxyl group at its C-terminus and an alpha-subunit with a pyruvoyl group at its N-terminus.

The protein localises to the cytoplasm. The enzyme catalyses L-aspartate + H(+) = beta-alanine + CO2. It functions in the pathway cofactor biosynthesis; (R)-pantothenate biosynthesis; beta-alanine from L-aspartate: step 1/1. Functionally, catalyzes the pyruvoyl-dependent decarboxylation of aspartate to produce beta-alanine. The protein is Aspartate 1-decarboxylase of Shouchella clausii (strain KSM-K16) (Alkalihalobacillus clausii).